A 273-amino-acid chain; its full sequence is Undecaprenyl-diphosphatase (273 aa).

7 helical membrane passes run 4-24 (LILL…FLPI), 43-63 (KAKV…CWEY), 82-102 (FVIN…LFIK), 108-128 (LFHP…ILWA), 183-203 (AAEF…FYDV), 217-237 (MFAT…RGFI), and 248-268 (FAWY…SGLV).

The protein belongs to the UppP family.

It is found in the cell inner membrane. The enzyme catalyses di-trans,octa-cis-undecaprenyl diphosphate + H2O = di-trans,octa-cis-undecaprenyl phosphate + phosphate + H(+). Its function is as follows. Catalyzes the dephosphorylation of undecaprenyl diphosphate (UPP). Confers resistance to bacitracin. This is Undecaprenyl-diphosphatase from Nitrosomonas europaea (strain ATCC 19718 / CIP 103999 / KCTC 2705 / NBRC 14298).